A 261-amino-acid chain; its full sequence is Methyl jasmonate esterase 1 (261 aa).

Residues 8–251 (FVLVHGACHG…MFSKPLDLCA (244 aa)) enclose the AB hydrolase-1 domain. Serine 82 (acyl-ester intermediate) is an active-site residue. Residues aspartate 211 and histidine 239 each act as charge relay system in the active site.

It belongs to the AB hydrolase superfamily. Methylesterase family. As to quaternary structure, homodimer.

It carries out the reaction methyl (-)-jasmonate + H2O = jasmonate + methanol + H(+). The catalysed reaction is methyl salicylate + H2O = salicylate + methanol + H(+). Its pathway is plant hormone biosynthesis. It functions in the pathway lipid metabolism; oxylipin biosynthesis. Functionally, methylesterase that catalyzes the hydrolysis of methyl jasmonate (MeJA) into jasmonate (JA). Can also use methyl salicylate (MeSA) as substrate with a lower efficiency. This is Methyl jasmonate esterase 1 from Vitis vinifera (Grape).